The following is an 874-amino-acid chain: Alanine--tRNA ligase (874 aa).

4 residues coordinate Zn(2+): His564, His568, Cys665, and His669.

This sequence belongs to the class-II aminoacyl-tRNA synthetase family. The cofactor is Zn(2+).

It localises to the cytoplasm. The catalysed reaction is tRNA(Ala) + L-alanine + ATP = L-alanyl-tRNA(Ala) + AMP + diphosphate. Catalyzes the attachment of alanine to tRNA(Ala) in a two-step reaction: alanine is first activated by ATP to form Ala-AMP and then transferred to the acceptor end of tRNA(Ala). Also edits incorrectly charged Ser-tRNA(Ala) and Gly-tRNA(Ala) via its editing domain. This Cupriavidus metallidurans (strain ATCC 43123 / DSM 2839 / NBRC 102507 / CH34) (Ralstonia metallidurans) protein is Alanine--tRNA ligase.